A 129-amino-acid chain; its full sequence is NADH-quinone oxidoreductase subunit A (129 aa).

Transmembrane regions (helical) follow at residues 14–34 (LAIH…VAAW), 67–87 (FLIA…FAWA), and 95–115 (WLGL…LVYL).

This sequence belongs to the complex I subunit 3 family. NDH-1 is composed of 14 different subunits. Subunits NuoA, H, J, K, L, M, N constitute the membrane sector of the complex.

Its subcellular location is the cell inner membrane. The enzyme catalyses a quinone + NADH + 5 H(+)(in) = a quinol + NAD(+) + 4 H(+)(out). Functionally, NDH-1 shuttles electrons from NADH, via FMN and iron-sulfur (Fe-S) centers, to quinones in the respiratory chain. The immediate electron acceptor for the enzyme in this species is believed to be ubiquinone. Couples the redox reaction to proton translocation (for every two electrons transferred, four hydrogen ions are translocated across the cytoplasmic membrane), and thus conserves the redox energy in a proton gradient. This chain is NADH-quinone oxidoreductase subunit A, found in Rhodopseudomonas palustris (strain BisB5).